The chain runs to 329 residues: Malate dehydrogenase 2 (329 aa).

Residue G12–A18 participates in NAD(+) binding. The substrate site is built by R93 and R99. NAD(+)-binding positions include N106, Q113, and V130–N132. Residues N132 and R163 each coordinate substrate. The Proton acceptor role is filled by H188.

It belongs to the LDH/MDH superfamily. MDH type 2 family.

It catalyses the reaction (S)-malate + NAD(+) = oxaloacetate + NADH + H(+). Its function is as follows. Catalyzes the reversible oxidation of malate to oxaloacetate. The protein is Malate dehydrogenase 2 of Burkholderia thailandensis (strain ATCC 700388 / DSM 13276 / CCUG 48851 / CIP 106301 / E264).